The following is a 100-amino-acid chain: Large ribosomal subunit protein bL21 (100 aa).

This sequence belongs to the bacterial ribosomal protein bL21 family. As to quaternary structure, part of the 50S ribosomal subunit. Contacts protein L20.

In terms of biological role, this protein binds to 23S rRNA in the presence of protein L20. The polypeptide is Large ribosomal subunit protein bL21 (Paramagnetospirillum magneticum (strain ATCC 700264 / AMB-1) (Magnetospirillum magneticum)).